Here is a 74-residue protein sequence, read N- to C-terminus: MMMTDLPENIRKTAVALLRLGEATAEDIAKITGRKRSTESYYLNLMADLKLVKKKKVGRKIYFIFNSRDQEKRQ.

Positions 1–25 (MMMTDLPENIRKTAVALLRLGEATA) are cleaved as a signal peptide.

This is an uncharacterized protein from Archaeoglobus fulgidus (strain ATCC 49558 / DSM 4304 / JCM 9628 / NBRC 100126 / VC-16).